The sequence spans 221 residues: Thymidylate kinase (221 aa).

10-17 (GIDGAGKT) is a binding site for ATP.

Belongs to the thymidylate kinase family.

It carries out the reaction dTMP + ATP = dTDP + ADP. Functionally, phosphorylation of dTMP to form dTDP in both de novo and salvage pathways of dTTP synthesis. The protein is Thymidylate kinase of Desulforudis audaxviator (strain MP104C).